The sequence spans 422 residues: Histidine--tRNA ligase (422 aa).

The protein belongs to the class-II aminoacyl-tRNA synthetase family. Homodimer.

It is found in the cytoplasm. It catalyses the reaction tRNA(His) + L-histidine + ATP = L-histidyl-tRNA(His) + AMP + diphosphate + H(+). The polypeptide is Histidine--tRNA ligase (Nocardia farcinica (strain IFM 10152)).